Consider the following 221-residue polypeptide: Small ribosomal subunit protein uS3 (221 aa).

Positions 39 to 108 constitute a KH type-2 domain; sequence IRKFVKKELF…NVLINIVEVK (70 aa).

The protein belongs to the universal ribosomal protein uS3 family. In terms of assembly, part of the 30S ribosomal subunit. Forms a tight complex with proteins S10 and S14.

Its function is as follows. Binds the lower part of the 30S subunit head. Binds mRNA in the 70S ribosome, positioning it for translation. In Clostridium beijerinckii (strain ATCC 51743 / NCIMB 8052) (Clostridium acetobutylicum), this protein is Small ribosomal subunit protein uS3.